The sequence spans 354 residues: tRNA pseudouridine synthase D (354 aa).

The active-site Nucleophile is the Asp-86. One can recognise a TRUD domain in the interval 162–309; that stretch reads GVPNYFGPQR…LEVGRRALRL (148 aa).

The protein belongs to the pseudouridine synthase TruD family.

The catalysed reaction is uridine(13) in tRNA = pseudouridine(13) in tRNA. Functionally, responsible for synthesis of pseudouridine from uracil-13 in transfer RNAs. The polypeptide is tRNA pseudouridine synthase D (Methylococcus capsulatus (strain ATCC 33009 / NCIMB 11132 / Bath)).